Reading from the N-terminus, the 181-residue chain is Adenine phosphoribosyltransferase (181 aa).

Belongs to the purine/pyrimidine phosphoribosyltransferase family. Homodimer.

Its subcellular location is the cytoplasm. It carries out the reaction AMP + diphosphate = 5-phospho-alpha-D-ribose 1-diphosphate + adenine. Its pathway is purine metabolism; AMP biosynthesis via salvage pathway; AMP from adenine: step 1/1. In terms of biological role, catalyzes a salvage reaction resulting in the formation of AMP, that is energically less costly than de novo synthesis. The chain is Adenine phosphoribosyltransferase from Acidobacterium capsulatum (strain ATCC 51196 / DSM 11244 / BCRC 80197 / JCM 7670 / NBRC 15755 / NCIMB 13165 / 161).